We begin with the raw amino-acid sequence, 337 residues long: Heat-inducible transcription repressor HrcA (337 aa).

This sequence belongs to the HrcA family.

Negative regulator of class I heat shock genes (grpE-dnaK-dnaJ and groELS operons). Prevents heat-shock induction of these operons. This chain is Heat-inducible transcription repressor HrcA, found in Pseudarthrobacter chlorophenolicus (strain ATCC 700700 / DSM 12829 / CIP 107037 / JCM 12360 / KCTC 9906 / NCIMB 13794 / A6) (Arthrobacter chlorophenolicus).